Reading from the N-terminus, the 418-residue chain is Putative competence-damage inducible protein (418 aa).

Belongs to the CinA family.

The sequence is that of Putative competence-damage inducible protein from Clostridioides difficile (strain 630) (Peptoclostridium difficile).